Consider the following 173-residue polypeptide: Glutamyl-tRNA(Gln) amidotransferase subunit C-1, mitochondrial (173 aa).

A mitochondrion-targeting transit peptide spans 1–23 (MIRIPFRLRPPPGRTLHSLVRTF). Positions 51–70 (PSKVPQRPHKSTTTVGQSTP) are disordered. The segment covering 61 to 70 (STTTVGQSTP) has biased composition (polar residues).

It belongs to the GatC family. As to quaternary structure, subunit of the heterotrimeric GatCAB amidotransferase (AdT) complex, composed of A, B and C subunits.

The protein localises to the mitochondrion. It catalyses the reaction L-glutamyl-tRNA(Gln) + L-glutamine + ATP + H2O = L-glutaminyl-tRNA(Gln) + L-glutamate + ADP + phosphate + H(+). Its function is as follows. Allows the formation of correctly charged Gln-tRNA(Gln) through the transamidation of misacylated Glu-tRNA(Gln) in the mitochondria. The reaction takes place in the presence of glutamine and ATP through an activated gamma-phospho-Glu-tRNA(Gln). This Culex quinquefasciatus (Southern house mosquito) protein is Glutamyl-tRNA(Gln) amidotransferase subunit C-1, mitochondrial.